Reading from the N-terminus, the 330-residue chain is Ketol-acid reductoisomerase (NADP(+)) (330 aa).

Residues 1–181 (MNIYYEQDAD…GGTKAGVIET (181 aa)) enclose the KARI N-terminal Rossmann domain. Residues 24 to 27 (YGSQ), lysine 47, serine 50, serine 52, and 82 to 85 (DQTQ) each bind NADP(+). Histidine 107 is a catalytic residue. NADP(+) is bound at residue glycine 133. One can recognise a KARI C-terminal knotted domain in the interval 182 to 327 (SFKDETETDL…AKLRGMMSWL (146 aa)). Residues aspartate 190, glutamate 194, glutamate 226, and glutamate 230 each coordinate Mg(2+). Serine 251 is a binding site for substrate.

It belongs to the ketol-acid reductoisomerase family. Requires Mg(2+) as cofactor.

It carries out the reaction (2R)-2,3-dihydroxy-3-methylbutanoate + NADP(+) = (2S)-2-acetolactate + NADPH + H(+). The enzyme catalyses (2R,3R)-2,3-dihydroxy-3-methylpentanoate + NADP(+) = (S)-2-ethyl-2-hydroxy-3-oxobutanoate + NADPH + H(+). It participates in amino-acid biosynthesis; L-isoleucine biosynthesis; L-isoleucine from 2-oxobutanoate: step 2/4. It functions in the pathway amino-acid biosynthesis; L-valine biosynthesis; L-valine from pyruvate: step 2/4. Involved in the biosynthesis of branched-chain amino acids (BCAA). Catalyzes an alkyl-migration followed by a ketol-acid reduction of (S)-2-acetolactate (S2AL) to yield (R)-2,3-dihydroxy-isovalerate. In the isomerase reaction, S2AL is rearranged via a Mg-dependent methyl migration to produce 3-hydroxy-3-methyl-2-ketobutyrate (HMKB). In the reductase reaction, this 2-ketoacid undergoes a metal-dependent reduction by NADPH to yield (R)-2,3-dihydroxy-isovalerate. The polypeptide is Ketol-acid reductoisomerase (NADP(+)) (Chlorobaculum tepidum (strain ATCC 49652 / DSM 12025 / NBRC 103806 / TLS) (Chlorobium tepidum)).